Consider the following 123-residue polypeptide: U9-barytoxin-Tl1a (123 aa).

A signal peptide spans 1-18 (MNTMITFLVLFVLTAANG). A propeptide spanning residues 19 to 77 (APEANERKIPEAIHNEDQSLAEMAEELMFFLQQTEFEAPLLQEEEEAEXAEXRNSRERR) is cleaved from the precursor. Disulfide bonds link C78–C93, C85–C98, and C92–C112.

It belongs to the neurotoxin 14 (magi-1) family. 05 (ICK-7) subfamily. ICK-7 sub-subfamily. Expressed by the venom gland.

The protein resides in the secreted. In terms of biological role, ion channel inhibitor. This is U9-barytoxin-Tl1a from Trittame loki (Brush-footed trapdoor spider).